Reading from the N-terminus, the 188-residue chain is Ribosomal RNA small subunit methyltransferase G (188 aa).

Residues G69, F74, 119–120 (VQ), and R134 each bind S-adenosyl-L-methionine.

Belongs to the methyltransferase superfamily. RNA methyltransferase RsmG family.

The protein localises to the cytoplasm. The catalysed reaction is guanosine(527) in 16S rRNA + S-adenosyl-L-methionine = N(7)-methylguanosine(527) in 16S rRNA + S-adenosyl-L-homocysteine. Functionally, specifically methylates the N7 position of guanine in position 527 of 16S rRNA. The protein is Ribosomal RNA small subunit methyltransferase G of Campylobacter jejuni (strain RM1221).